The following is a 271-amino-acid chain: Nuclear egress protein 2 (271 aa).

At 1–249 the chain is on the perinuclear space side; the sequence is MSVVGKRVVD…LGRAVALVRR (249 aa). Residues 250-267 form a helical membrane-spanning segment; it reads SWPWISAGIAFLCLGLVW. Residues 268-271 are Nuclear-facing; it reads MRPS.

Belongs to the herpesviridae NEC2 protein family. Forms a heterohexameric complex with NEC1. Phosphorylated.

The protein resides in the host nucleus inner membrane. Functionally, plays an essential role in virion nuclear egress, the first step of virion release from infected cell. Within the host nucleus, NEC1 interacts with the newly formed capsid through the vertexes and directs it to the inner nuclear membrane by associating with NEC2. Induces the budding of the capsid at the inner nuclear membrane as well as its envelopment into the perinuclear space. There, the NEC1/NEC2 complex promotes the fusion of the enveloped capsid with the outer nuclear membrane and the subsequent release of the viral capsid into the cytoplasm where it will reach the secondary budding sites in the host Golgi or trans-Golgi network. This chain is Nuclear egress protein 2, found in Homo sapiens (Human).